The sequence spans 526 residues: Na(+)/H(+) antiporter NhaB (526 aa).

11 consecutive transmembrane segments (helical) span residues 14 to 34 (FLGY…LVNP), 63 to 83 (CYPL…GMTS), 99 to 119 (MLLV…LFVF), 122 to 142 (LLLR…AAAF), 146 to 166 (FLDA…FYGI), 206 to 226 (LLMH…VGEP), 239 to 259 (FVSF…CGIL), 307 to 327 (AVIG…VGLI), 357 to 377 (FTAL…QQLF), 451 to 471 (ATPN…APLI), and 479 to 499 (VIMA…CVEF).

Belongs to the NhaB Na(+)/H(+) (TC 2.A.34) antiporter family.

The protein resides in the cell inner membrane. The enzyme catalyses 2 Na(+)(in) + 3 H(+)(out) = 2 Na(+)(out) + 3 H(+)(in). Functionally, na(+)/H(+) antiporter that extrudes sodium in exchange for external protons. The polypeptide is Na(+)/H(+) antiporter NhaB (Pectobacterium carotovorum subsp. carotovorum (strain PC1)).